We begin with the raw amino-acid sequence, 305 residues long: Peroxisome biogenesis factor 2 (305 aa).

The Peroxisomal matrix segment spans residues 1-15 (MAAREESTQSANRVL). The helical transmembrane segment at 16 to 42 (RISQLDALELNKALEQLVWSQFTQCFH) threads the bilayer. The Cytoplasmic segment spans residues 43–48 (GFKPGL). Residues 49 to 74 (LARFEPEVKAFLWLFLWRFTIYSKNA) traverse the membrane as a helical segment. The Peroxisomal matrix segment spans residues 75-98 (TVGQSVLNIQYKNDSSPNPVYQPP). Residues 99–125 (SKNQKLLYAVCTIGGRWLEERCYDLFR) form a helical membrane-spanning segment. At 126 to 133 (NRHLASFG) the chain is on the cytoplasmic side. Residues 134-160 (KAKQCMNFVVGLLKLGELMNFLIFLQK) traverse the membrane as a helical segment. Residues 161–187 (GKFATLTERLLGIHSVFCKPQSMREVG) lie on the Peroxisomal matrix side of the membrane. A helical transmembrane segment spans residues 188–211 (FEYMNRELLWHGFAEFLVFLLPLI). At 212-305 (NIQKLKAKLS…GIEMSEVNAL (94 aa)) the chain is on the cytoplasmic side. 8 residues coordinate Zn(2+): cysteine 244, cysteine 247, cysteine 259, histidine 261, cysteine 264, cysteine 267, cysteine 280, and cysteine 283. The segment at 244–284 (CALCGEWPTMPHTIGCEHVFCYYCVKSSFLFDMYFTCPKCG) adopts an RING-type zinc-finger fold.

It belongs to the pex2/pex10/pex12 family. Component of the PEX2-PEX10-PEX12 retrotranslocation channel, composed of PEX2, PEX10 and PEX12. Post-translationally, forms intramolecular and intermolecular disulfide bonds in response to reactive oxygen species (ROS), promoting higher stability.

The protein localises to the peroxisome membrane. The enzyme catalyses [E2 ubiquitin-conjugating enzyme]-S-ubiquitinyl-L-cysteine + [acceptor protein]-L-cysteine = [E2 ubiquitin-conjugating enzyme]-L-cysteine + [acceptor protein]-S-ubiquitinyl-L-cysteine.. The catalysed reaction is S-ubiquitinyl-[E2 ubiquitin-conjugating enzyme]-L-cysteine + [acceptor protein]-L-lysine = [E2 ubiquitin-conjugating enzyme]-L-cysteine + N(6)-ubiquitinyl-[acceptor protein]-L-lysine.. It functions in the pathway protein modification; protein ubiquitination. Functionally, E3 ubiquitin-protein ligase component of a retrotranslocation channel required for peroxisome organization by mediating export of the PEX5 receptor from peroxisomes to the cytosol, thereby promoting PEX5 recycling. The retrotranslocation channel is composed of PEX2, PEX10 and PEX12; each subunit contributing transmembrane segments that coassemble into an open channel that specifically allows the passage of PEX5 through the peroxisomal membrane. PEX2 also regulates peroxisome organization by acting as a E3 ubiquitin-protein ligase. PEX2 ubiquitinates PEX5 during its passage through the retrotranslocation channel: catalyzes monoubiquitination of PEX5 at 'Cys-11', a modification that acts as a signal for PEX5 extraction into the cytosol. Required for pexophagy in response to starvation by mediating ubiquitination of peroxisomal proteins, such as PEX5 and ABCD3/PMP70. Also involved in the response to reactive oxygen species (ROS) by mediating 'Lys-48'-linked polyubiquitination and subsequent degradation of PNPLA2/ATGL, thereby regulating lipolysis. The polypeptide is Peroxisome biogenesis factor 2 (Pex2) (Rattus norvegicus (Rat)).